The chain runs to 941 residues: Isoleucine--tRNA ligase (941 aa).

The 'HIGH' region motif lies at 59 to 69 (PYANGNIHIGH). Glutamate 562 contributes to the L-isoleucyl-5'-AMP binding site. The 'KMSKS' region signature appears at 603–607 (KMSKS). Residue lysine 606 coordinates ATP. Cysteine 904, cysteine 907, cysteine 924, and cysteine 927 together coordinate Zn(2+).

Belongs to the class-I aminoacyl-tRNA synthetase family. IleS type 1 subfamily. As to quaternary structure, monomer. It depends on Zn(2+) as a cofactor.

The protein localises to the cytoplasm. The catalysed reaction is tRNA(Ile) + L-isoleucine + ATP = L-isoleucyl-tRNA(Ile) + AMP + diphosphate. Its function is as follows. Catalyzes the attachment of isoleucine to tRNA(Ile). As IleRS can inadvertently accommodate and process structurally similar amino acids such as valine, to avoid such errors it has two additional distinct tRNA(Ile)-dependent editing activities. One activity is designated as 'pretransfer' editing and involves the hydrolysis of activated Val-AMP. The other activity is designated 'posttransfer' editing and involves deacylation of mischarged Val-tRNA(Ile). This Haemophilus influenzae (strain ATCC 51907 / DSM 11121 / KW20 / Rd) protein is Isoleucine--tRNA ligase.